Here is a 375-residue protein sequence, read N- to C-terminus: MEVPRLDHALSSPSSPCEEIKNLSLEAIQLCDRDGNKSQDSGIAEMEELPVPHNIKINNITCDSFKISWDMDSKSKDRITHYFIDLNKKENKNSNKFKHKDVPTKLVAKAVPLPMTVRGHWFLSPRTEYTVAVQTASKQVDGDYVVSEWSEIIEFCTADYSKVHLTQLLEKADVIAGRMLKFSVFYRNQHKEYFDYVRDHYGNAMQPSIKDNSGSHGSPISGKLEGIFFSCSTEFNTGKPPQDSPYGRYRFEIAAEKLFNPNTNLYFGDFYCMYTAYHYVILVIAPVGSPGDEFCKQRLPQLNSKDNKFLTCTEEDGRLLYHHAQDVILEVIYTDPVALSLGTVAEITGHQLMSLSTANAKKDPSCKTCNISVGR.

3 positions are modified to phosphoserine: serine 11, serine 12, and serine 15. Asparagine 22 carries N-linked (GlcNAc...) asparagine glycosylation. Phosphoserine is present on serine 24. An N-linked (GlcNAc...) asparagine glycan is attached at asparagine 36. A Fibronectin type-III domain is found at 51–160 (VPHNIKINNI…EIIEFCTADY (110 aa)).

This sequence belongs to the PHYHIP family.

In terms of biological role, may play a role in the development of the central system. This is Phytanoyl-CoA hydroxylase-interacting protein-like (Phyhipl) from Rattus norvegicus (Rat).